Reading from the N-terminus, the 333-residue chain is Protoheme IX farnesyltransferase (333 aa).

7 helical membrane passes run 63–83 (LACT…LNCI), 109–129 (AAFI…VSGV), 132–152 (LAAG…TAIL), 160–180 (IVIG…AASG), 188–208 (WLFA…ALLL), 245–265 (GFGV…LIPF), and 292–312 (WSIF…LPMA).

It belongs to the UbiA prenyltransferase family. Protoheme IX farnesyltransferase subfamily.

It localises to the cell inner membrane. It catalyses the reaction heme b + (2E,6E)-farnesyl diphosphate + H2O = Fe(II)-heme o + diphosphate. It functions in the pathway porphyrin-containing compound metabolism; heme O biosynthesis; heme O from protoheme: step 1/1. Functionally, converts heme B (protoheme IX) to heme O by substitution of the vinyl group on carbon 2 of heme B porphyrin ring with a hydroxyethyl farnesyl side group. This Prochlorococcus marinus (strain MIT 9303) protein is Protoheme IX farnesyltransferase.